Here is a 211-residue protein sequence, read N- to C-terminus: Cytochrome c biogenesis ATP-binding export protein CcmA (211 aa).

The region spanning 8 to 210 is the ABC transporter domain; it reads LEAKNLQCER…EVRRIQLGAV (203 aa). 40–47 lines the ATP pocket; the sequence is GPNGAGKT.

This sequence belongs to the ABC transporter superfamily. CcmA exporter (TC 3.A.1.107) family. As to quaternary structure, the complex is composed of two ATP-binding proteins (CcmA) and two transmembrane proteins (CcmB).

It localises to the cell inner membrane. The catalysed reaction is heme b(in) + ATP + H2O = heme b(out) + ADP + phosphate + H(+). Functionally, part of the ABC transporter complex CcmAB involved in the biogenesis of c-type cytochromes; once thought to export heme, this seems not to be the case, but its exact role is uncertain. Responsible for energy coupling to the transport system. The sequence is that of Cytochrome c biogenesis ATP-binding export protein CcmA from Hahella chejuensis (strain KCTC 2396).